Reading from the N-terminus, the 122-residue chain is Hexon-interlacing protein (122 aa).

A coiled-coil region spans residues 72 to 106; sequence VTELNESIDELQQKMTELEKRLKIMEEKIEEIKLA.

This sequence belongs to the adenoviridae hexon-interlacing protein family. In terms of assembly, homotrimer. Interacts with hexon protein; this interaction tethers the hexons together. Self-interacts with adjacent proteins. Interacts with kinesin light chain KLC1; this interaction leads to capsid disruption at the nuclear pore complex during virus entry into host cell.

Its subcellular location is the virion. The protein resides in the host nucleus. Functionally, structural component of the virion that acts as a cement protein on the capsid exterior and forms triskelion structures consisting of three molecules that stabilize three hexon trimers at the center of each icosahedral facet and fixes the peripentonal hexons. Dispensable for assembly. During virus entry, recruits the anterograde motor kinesin-1 to the capsid docked at the nuclear pore complex thereby subjecting the docked capsid to a pulling force. The resulting tension leads to capsid disruption, dispersion of capsid fragments toward cell periphery and eventually viral DNA entry into the host nucleus. This is Hexon-interlacing protein from Tupaiidae (tree shrews).